The chain runs to 51 residues: Mating pheromone Er-23 (51 aa).

Disulfide bonds link Cys3–Cys24, Cys6–Cys16, Cys13–Cys47, Cys27–Cys40, and Cys35–Cys51.

The protein resides in the secreted. In terms of biological role, mating ciliate pheromones (or gamones) are diffusible extracellular communication signals that distinguish different intraspecific classes of cells commonly referred to as 'mating types'. They prepare the latter for conjugation by changing their cell surface properties. The chain is Mating pheromone Er-23 (MAT23) from Euplotes raikovi.